The following is a 584-amino-acid chain: Arginine--tRNA ligase (584 aa).

The short motif at 126–136 (PNIAKEMHVGH) is the 'HIGH' region element.

This sequence belongs to the class-I aminoacyl-tRNA synthetase family. Monomer.

The protein localises to the cytoplasm. The catalysed reaction is tRNA(Arg) + L-arginine + ATP = L-arginyl-tRNA(Arg) + AMP + diphosphate. The sequence is that of Arginine--tRNA ligase from Synechococcus sp. (strain ATCC 27144 / PCC 6301 / SAUG 1402/1) (Anacystis nidulans).